The sequence spans 124 residues: Protein ApaG (124 aa).

The ApaG domain occupies 1–124 (MSRYELTVQV…FALAMPRMLH (124 aa)).

The polypeptide is Protein ApaG (Ralstonia nicotianae (strain ATCC BAA-1114 / GMI1000) (Ralstonia solanacearum)).